The following is a 317-amino-acid chain: Transaldolase 1 (317 aa).

Catalysis depends on lysine 132, which acts as the Schiff-base intermediate with substrate.

Belongs to the transaldolase family. Type 1 subfamily. Homodimer.

The protein resides in the cytoplasm. It catalyses the reaction D-sedoheptulose 7-phosphate + D-glyceraldehyde 3-phosphate = D-erythrose 4-phosphate + beta-D-fructose 6-phosphate. It functions in the pathway carbohydrate degradation; pentose phosphate pathway; D-glyceraldehyde 3-phosphate and beta-D-fructose 6-phosphate from D-ribose 5-phosphate and D-xylulose 5-phosphate (non-oxidative stage): step 2/3. Transaldolase is important for the balance of metabolites in the pentose-phosphate pathway. The protein is Transaldolase 1 of Shigella sonnei (strain Ss046).